The chain runs to 313 residues: Mitochondrial uncoupling protein 5 (313 aa).

Solcar repeat units lie at residues 4-108 (KGFA…IKGE), 117-208 (MPLM…VKET), and 217-307 (DGLG…VKKL). 6 consecutive transmembrane segments (helical) span residues 6–26 (FAEG…LDLI), 77–97 (MRAL…YSTT), 123–143 (IGAG…ADVA), 182–202 (RGSS…LASY), 223–243 (VSAS…VDVI), and 280–300 (YKGF…LFVT).

It belongs to the mitochondrial carrier (TC 2.A.29) family. In terms of tissue distribution, expressed in roots, leaves, stems and flowers.

The protein localises to the mitochondrion inner membrane. PUMPS are mitochondrial transporter proteins that create proton leaks across the inner mitochondrial membrane, thus uncoupling oxidative phosphorylation. This leads to a decrease in the efficiency of oxidative phosphorylation and an increase in heat production. May be involved in protecting plant cells against oxidative stress damage. Recombinant PUMP5, reconstituted into liposomes, transports a wide range of dicarboxylic acids including malate, oxaloacetate and succinate as well as phosphate, sulfate and thiosulfate. However, it is unknown if these transports are of any biological significance in vivo. The sequence is that of Mitochondrial uncoupling protein 5 (PUMP5) from Arabidopsis thaliana (Mouse-ear cress).